Consider the following 197-residue polypeptide: Adenine phosphoribosyltransferase (197 aa).

The protein belongs to the purine/pyrimidine phosphoribosyltransferase family. Homodimer.

Its subcellular location is the cytoplasm. The catalysed reaction is AMP + diphosphate = 5-phospho-alpha-D-ribose 1-diphosphate + adenine. Its pathway is purine metabolism; AMP biosynthesis via salvage pathway; AMP from adenine: step 1/1. Catalyzes a salvage reaction resulting in the formation of AMP, that is energically less costly than de novo synthesis. In Ralstonia nicotianae (strain ATCC BAA-1114 / GMI1000) (Ralstonia solanacearum), this protein is Adenine phosphoribosyltransferase.